Reading from the N-terminus, the 510-residue chain is NAD(P)H-quinone oxidoreductase subunit 2 A, chloroplastic (510 aa).

13 helical membrane-spanning segments follow: residues 24–44 (LLLFHGSFIFPECILIFGLIL), 57–77 (IPWLYFISSTSLVMSITALLF), 99–119 (IFQFLILLCSTLCIPLSVEYI), 124–144 (MAITEFLLFVLTATLGGMFLC), 149–169 (LITIFVAPECFSLCSYLLSGY), 183–203 (YLLMGGASSSILVHGFSWLYG), 227–247 (PGISIALIFITVGIGFKLSPA), 295–315 (WHLLLEILAILSMILGNLIAI), 323–343 (MLAYSSIGQIGYVIIGIIVGD), 347–367 (GYASMITYMLFYISMNLGTFA), 395–415 (ALSSALCLLSLGGLPPLAGFF), 418–438 (LHLFWCGWQAGLYFLVSIGLL), and 484–504 (MIVCVIASTIPGISMNPIIAI).

It belongs to the complex I subunit 2 family. As to quaternary structure, NDH is composed of at least 16 different subunits, 5 of which are encoded in the nucleus.

It localises to the plastid. The protein localises to the chloroplast thylakoid membrane. It catalyses the reaction a plastoquinone + NADH + (n+1) H(+)(in) = a plastoquinol + NAD(+) + n H(+)(out). It carries out the reaction a plastoquinone + NADPH + (n+1) H(+)(in) = a plastoquinol + NADP(+) + n H(+)(out). Functionally, NDH shuttles electrons from NAD(P)H:plastoquinone, via FMN and iron-sulfur (Fe-S) centers, to quinones in the photosynthetic chain and possibly in a chloroplast respiratory chain. The immediate electron acceptor for the enzyme in this species is believed to be plastoquinone. Couples the redox reaction to proton translocation, and thus conserves the redox energy in a proton gradient. This is NAD(P)H-quinone oxidoreductase subunit 2 A, chloroplastic from Platanus occidentalis (Sycamore).